Consider the following 185-residue polypeptide: Ribosome-recycling factor (185 aa).

This sequence belongs to the RRF family.

The protein resides in the cytoplasm. Its function is as follows. Responsible for the release of ribosomes from messenger RNA at the termination of protein biosynthesis. May increase the efficiency of translation by recycling ribosomes from one round of translation to another. The protein is Ribosome-recycling factor of Nocardioides sp. (strain ATCC BAA-499 / JS614).